Consider the following 770-residue polypeptide: Amyloid-beta precursor protein (770 aa).

A signal peptide spans 1-17; that stretch reads MLPGLALLLLAAWTARA. The Extracellular segment spans residues 18–701; that stretch reads LEVPTDGNAG…AEDVGSNKGA (684 aa). A GFLD subdomain region spans residues 28–123; the sequence is LLAEPQIAMF…PYRCLVGEFV (96 aa). In terms of domain architecture, E1 spans 28 to 189; sequence LLAEPQIAMF…RGVEFVCCPL (162 aa). 6 disulfides stabilise this stretch: cysteine 38–cysteine 62, cysteine 73–cysteine 117, cysteine 98–cysteine 105, cysteine 133–cysteine 187, cysteine 144–cysteine 174, and cysteine 158–cysteine 186. Position 96–110 (96–110) interacts with heparin; the sequence is NWCKRGRKQCKTHPH. The cuBD subdomain stretch occupies residues 131 to 189; the sequence is DKCKFLHQERMDVCETHLHWHTVAKETCSEKSTNLHDYGMLLPCGIDKFRGVEFVCCPL. Cu(2+) is bound by residues histidine 147, histidine 151, and tyrosine 168. The interval 181–188 is zinc-binding; the sequence is GVEFVCCP. Zn(2+) contacts are provided by glutamate 183, cysteine 186, and cysteine 187. The span at 194 to 207 shows a compositional bias: acidic residues; sequence DNVDSADAEEDDSD. The tract at residues 194–284 is disordered; the sequence is DNVDSADAEE…TTTTTTESVE (91 aa). Serine 198 is modified (phosphoserine; by CK2). At serine 206 the chain carries Phosphoserine; by CK1. Sulfotyrosine is present on residues tyrosine 217 and tyrosine 262. Residues 228-264 show a composition bias toward acidic residues; that stretch reads VAEEEEVAEVEEEEADDDEDDEDGDEVEEEAEEPYEE. Over residues 268-281 the composition is skewed to low complexity; sequence RTTSIATTTTTTTE. Disulfide bonds link cysteine 291-cysteine 341, cysteine 300-cysteine 324, and cysteine 316-cysteine 337. Residues 291-341 form the BPTI/Kunitz inhibitor domain; sequence CSEQAETGPCRAMISRWYFDVTEGKCAPFFYGGCGGNRNNFDTEEYCMAVC. Position 336 is a sulfotyrosine (tyrosine 336). The OX-2 motif lies at 344 to 365; the sequence is VMSQSLRKTTREPLTRDPVKLP. One can recognise an E2 domain in the interval 374–565; that stretch reads AVDKYLETPG…EEIQDEVDEL (192 aa). Positions 391-423 are heparin-binding; that stretch reads FQKAKERLEAKHRERMSQVMREWEEAERQAKNL. Serine 441 is modified (phosphoserine). The interval 491–522 is heparin-binding; the sequence is FNMLKKYVRAEQKDRQHTLKHFEHVRMVDPKK. Tyrosine 497 is subject to Phosphotyrosine. The collagen-binding stretch occupies residues 523-540; the sequence is AAQIRSQVMTHLRVIYER. N-linked (GlcNAc...) asparagine glycans are attached at residues asparagine 542 and asparagine 571. Residues histidine 677, tyrosine 681, histidine 684, and histidine 685 each contribute to the Cu(2+) site. Zn(2+) contacts are provided by histidine 677, tyrosine 681, histidine 684, and histidine 685. Positions 695 to 722 are interaction with PSEN1; the sequence is VGSNKGAIIGLMVGGVVIATVIVITLVM. A helical transmembrane segment spans residues 702-722; that stretch reads IIGLMVGGVVIATVIVITLVM. At 723–770 the chain is on the cytoplasmic side; that stretch reads LKKKQYTSIHHGVVEVDAAVTPEERHLSKMQQNGYENPTYKFFEQMQN. The Basolateral sorting signal signature appears at 724–734; the sequence is KKKQYTSIHHG. Threonine 729 carries the phosphothreonine modification. Serine 730 carries the post-translational modification Phosphoserine; by APP-kinase I. An interaction with G(o)-alpha region spans residues 732-751; the sequence is HHGVVEVDAAVTPEERHLSK. Threonine 743 carries the phosphothreonine; by CDK5 and MAPK10 modification. A required for the interaction with KIF5B and for anterograde transport in axons region spans residues 756–770; sequence GYENPTYKFFEQMQN. Tyrosine 757 carries the post-translational modification Phosphotyrosine; by ABL1. Residues 757-762 carry the YENPXY motif; contains endocytosis signal motif; sequence YENPTY. A Glycyl lysine isopeptide (Lys-Gly) (interchain with G-Cter in ubiquitin) cross-link involves residue lysine 763.

The protein belongs to the APP family. Binds, via its C-terminus, to the PID domain of several cytoplasmic proteins, including APBB family members, the APBA family, MAPK8IP1, SHC1 and NUMB and DAB1. Binding to DAB1 inhibits its serine phosphorylation. Interacts (via NPXY motif) with DAB2 (via PID domain); the interaction is impaired by tyrosine phosphorylation of the NPXY motif. Also interacts with GPCR-like protein BPP, APPBP1, IB1, KNS2 (via its TPR domains), APPBP2 (via BaSS) and DDB1. In vitro, it binds MAPT via the MT-binding domains. Associates with microtubules in the presence of ATP and in a kinesin-dependent manner. Interacts, through a C-terminal domain, with GNAO1. Amyloid-beta protein 42 binds CHRNA7 in hippocampal neurons. Amyloid-beta associates with HADH2. Interacts with CPEB1, ANKS1B and AGER. Interacts with ITM2B. Interacts with ITM2C. Interacts with IDE. Can form homodimers; dimerization is enhanced in the presence of Cu(2+) ions. Can form homodimers; this is promoted by heparin binding. Amyloid-beta protein 40 interacts with S100A9. CTF-alpha product of APP interacts with GSAP. Isoform APP695 interacts with SORL1 (via N-terminal ectodomain); this interaction retains APP in the trans-Golgi network and reduces processing into soluble APP-alpha and amyloid-beta peptides. Isoform APP770 interacts with SORL1. The C99 fragment also interacts with SORL1. Interacts with PLD3. Interacts with VDAC1. Interacts with NSG1; could regulate APP processing. Amyloid-beta protein 42 interacts with FPR2. Interacts (via transmembrane region) with PSEN1; the interaction is direct. Interacts with LRRK2. Interacts (via cytoplasmic domain) with KIF5B. Interacts (via C-terminus) with APBB2/FE65L1 (via C-terminus). Interacts (via intracellular domain) with APBB3. In terms of processing, proteolytically processed under normal cellular conditions. Cleavage either by alpha-secretase, beta-secretase or theta-secretase leads to generation and extracellular release of soluble APP peptides, S-APP-alpha and S-APP-beta, and the retention of corresponding membrane-anchored C-terminal fragments, C80, C83 and C99. Subsequent processing of C80 and C83 by gamma-secretase yields P3 peptides. This is the major secretory pathway and is non-amyloidogenic. Alternatively, presenilin/nicastrin-mediated gamma-secretase processing of C99 releases the amyloid-beta proteins, amyloid-beta protein 40 and amyloid-beta protein 42, major components of amyloid plaques, and the cytotoxic C-terminal fragments, gamma-CTF(50), gamma-CTF(57) and gamma-CTF(59). PSEN1 cleavage is more efficient with C83 than with C99 as substrate (in vitro). Amyloid-beta protein 40 and Amyloid-beta protein 42 are cleaved by ACE. Many other minor amyloid-beta peptides, amyloid-beta 1-X peptides, are found in cerebral spinal fluid (CSF) including the amyloid-beta X-15 peptides, produced from the cleavage by alpha-secretase. Post-translationally, proteolytically cleaved by caspases during neuronal apoptosis. Cleavage at Asp-739 by either caspase-3, -8 or -9 results in the production of the neurotoxic C31 peptide and the increased production of amyloid-beta peptides. N- and O-glycosylated. In terms of processing, phosphorylation in the C-terminal on tyrosine, threonine and serine residues is neuron-specific. Phosphorylation can affect APP processing, neuronal differentiation and interaction with other proteins. Phosphorylated on Thr-743 in neuronal cells by Cdc5 kinase and Mapk10, in dividing cells by Cdc2 kinase in a cell-cycle dependent manner with maximal levels at the G2/M phase and, in vitro, by GSK-3-beta. The Thr-743 phosphorylated form causes a conformational change which reduces binding of Fe65 family members. In dopaminergic (DA) neurons, phosphorylation on Thr-743 by LRKK2 promotes the production and the nuclear translocation of the APP intracellular domain (AICD) which induces DA neuron apoptosis. Phosphorylation on Tyr-757 is required for SHC binding. Phosphorylated in the extracellular domain by casein kinases on both soluble and membrane-bound APP. This phosphorylation is inhibited by heparin. Post-translationally, trophic-factor deprivation triggers the cleavage of surface APP by beta-secretase to release sAPP-beta which is further cleaved to release an N-terminal fragment of APP (N-APP). Amyloid-beta peptides are degraded by IDE. In terms of processing, sulfated on tyrosine residues.

The protein resides in the cell membrane. Its subcellular location is the membrane. It localises to the perikaryon. The protein localises to the cell projection. It is found in the growth cone. The protein resides in the clathrin-coated pit. Its subcellular location is the early endosome. It localises to the cytoplasmic vesicle. The protein localises to the endoplasmic reticulum. It is found in the golgi apparatus. The protein resides in the secreted. Its subcellular location is the cell surface. It localises to the nucleus. The protein localises to the cytoplasm. In terms of biological role, functions as a cell surface receptor and performs physiological functions on the surface of neurons relevant to neurite growth, neuronal adhesion and axonogenesis. Interaction between APP molecules on neighboring cells promotes synaptogenesis. Involved in cell mobility and transcription regulation through protein-protein interactions. Can promote transcription activation through binding to APBB1-KAT5 and inhibit Notch signaling through interaction with Numb. Couples to apoptosis-inducing pathways such as those mediated by G(o) and JIP. Inhibits G(o)-alpha ATPase activity. Acts as a kinesin I membrane receptor, mediating the axonal transport of beta-secretase and presenilin 1. By acting as a kinesin I membrane receptor, plays a role in axonal anterograde transport of cargo towards synapses in axons. May be involved in copper homeostasis/oxidative stress through copper ion reduction. In vitro, copper-metallated APP induces neuronal death directly or is potentiated through Cu(2+)-mediated low-density lipoprotein oxidation. Can regulate neurite outgrowth through binding to components of the extracellular matrix such as heparin and collagen I and IV. Induces a AGER-dependent pathway that involves activation of p38 MAPK, resulting in internalization of amyloid-beta peptide and mitochondrial dysfunction in cultured cortical neurons. Provides Cu(2+) ions for GPC1 which are required for release of nitric oxide (NO) and subsequent degradation of the heparan sulfate chains on GPC1. Functionally, amyloid-beta peptides are lipophilic metal chelators with metal-reducing activity. Binds transient metals such as copper, zinc and iron. Its function is as follows. The gamma-CTF peptides as well as the caspase-cleaved peptides, including C31, are potent enhancers of neuronal apoptosis. The sequence is that of Amyloid-beta precursor protein from Macaca fascicularis (Crab-eating macaque).